Consider the following 256-residue polypeptide: 5'-nucleotidase SurE (256 aa).

The a divalent metal cation site is built by Asp-8, Asp-9, Ser-39, and Asn-91.

Belongs to the SurE nucleotidase family. The cofactor is a divalent metal cation.

It localises to the cytoplasm. It catalyses the reaction a ribonucleoside 5'-phosphate + H2O = a ribonucleoside + phosphate. In terms of biological role, nucleotidase that shows phosphatase activity on nucleoside 5'-monophosphates. The protein is 5'-nucleotidase SurE of Marinobacter nauticus (strain ATCC 700491 / DSM 11845 / VT8) (Marinobacter aquaeolei).